Here is a 309-residue protein sequence, read N- to C-terminus: MAKTYIFGHKNPDTDAISSAIIMADFEQQTGNAEATAYRLGEVGPETQYALDHFNVTAPELLNDDLADQNVILVDHNEFQQSADSIADAAVQHVVDHHRIANFETAAPLYYRAEPVGCTATILYKMYKERGFEIKPEIAGLMISAIISDSLLFKSPTCTEQDVQAAEALKSIANVDLESYGLEMLKAGASTKDKSVSDILSMDAKSFNMGDFVTRIGQVNTVDIDEVFARQEELEKEMLEVSANEKYDLFVLVVTDIINSDSKILVVGAEKDKVGVAFNVTLDNNTAFLPGVVSRKKQVVPQITEALTK.

Mn(2+) contacts are provided by histidine 9, aspartate 13, aspartate 15, aspartate 75, histidine 97, and aspartate 149.

This sequence belongs to the PPase class C family. Mn(2+) is required as a cofactor.

Its subcellular location is the cytoplasm. It catalyses the reaction diphosphate + H2O = 2 phosphate + H(+). The chain is Probable manganese-dependent inorganic pyrophosphatase from Staphylococcus saprophyticus subsp. saprophyticus (strain ATCC 15305 / DSM 20229 / NCIMB 8711 / NCTC 7292 / S-41).